The sequence spans 223 residues: Serum amyloid P-component (223 aa).

Residues 1–19 (MNKPLLWISVLTSLLEAFA) form the signal peptide. One can recognise a Pentraxin (PTX) domain in the interval 24–223 (SGKVFVFPRE…YVIIKPLVWV (200 aa)). Asparagine 51 carries N-linked (GlcNAc...) asparagine glycosylation. Cysteine 55 and cysteine 114 are oxidised to a cystine. The Ca(2+) site is built by aspartate 77, asparagine 78, glutamate 155, glutamine 156, aspartate 157, and glutamine 167.

The protein belongs to the pentraxin family. In terms of assembly, homopentamer. Pentraxin (or pentaxin) have a discoid arrangement of 5 non-covalently bound subunits. It depends on Ca(2+) as a cofactor. N-glycosylated with a complex biantennary oligosaccharide chain with a sialic acid at the end (disialo-SAP). Monosialo-SAP as well as asioalo-SAP are also detected. As to expression, found in serum and urine.

It localises to the secreted. In terms of biological role, can interact with DNA and histones and may scavenge nuclear material released from damaged circulating cells. May also function as a calcium-dependent lectin. In Homo sapiens (Human), this protein is Serum amyloid P-component (APCS).